Reading from the N-terminus, the 283-residue chain is MSNLFMTATQLHPSKQLKKLQARLRGLVGKAIRDYNLIEAGDRIMVCLSGGKDSYTLLDILLHLQRAAPIDFEILAVNLDQKQPNFPEQVLPNYLNQLQVPYRIVEEDTYSTVKRVIPEGKTMCGLCSRLRRGILYRVAQEEQATKIALGHHREDIIETLFLNLFHAGKLEAMPPKLLSDNRQHMVIRPLAYCPEADIQRYADLRQFPIIPCTLCGSQETLQRVQVKQMLQAWEQETPGRLETIFRSLQNIELSQLADPQLFDFAHLAIAATPYADSPDRSGL.

Residues 49–54 carry the PP-loop motif motif; it reads SGGKDS. Positions 124, 127, and 215 each coordinate [4Fe-4S] cluster.

The protein belongs to the TtcA family. As to quaternary structure, homodimer. The cofactor is Mg(2+). [4Fe-4S] cluster serves as cofactor.

Its subcellular location is the cytoplasm. The catalysed reaction is cytidine(32) in tRNA + S-sulfanyl-L-cysteinyl-[cysteine desulfurase] + AH2 + ATP = 2-thiocytidine(32) in tRNA + L-cysteinyl-[cysteine desulfurase] + A + AMP + diphosphate + H(+). Its pathway is tRNA modification. Catalyzes the ATP-dependent 2-thiolation of cytidine in position 32 of tRNA, to form 2-thiocytidine (s(2)C32). The sulfur atoms are provided by the cysteine/cysteine desulfurase (IscS) system. This Acaryochloris marina (strain MBIC 11017) protein is tRNA-cytidine(32) 2-sulfurtransferase.